The chain runs to 333 residues: Aquaporin-1 (333 aa).

The interval 1–26 (MQKMSEKPLYRAAENPTRNADRRAGR) is disordered. 2 helical membrane-spanning segments follow: residues 85-105 (LAMF…HFTG) and 116-136 (FHGF…GGII). The NPA 1 motif lies at 137 to 139 (NPA). 3 helical membrane passes run 156–176 (LVLV…VYLI), 213–233 (TGAI…FLSI), and 245–265 (LFPF…SYSA). The NPA 2 motif lies at 270-272 (NPA). A helical transmembrane segment spans residues 303 to 323 (WLFPYVGALFGAVMYQIFVGV).

It belongs to the MIP/aquaporin (TC 1.A.8) family.

It localises to the cell membrane. Functionally, aquaglyceroporin that may modulate the water content and osmolytes during anhydrobiosis. The polypeptide is Aquaporin-1 (Milnesium tardigradum (Water bear)).